The sequence spans 1068 residues: Disheveled-associated activator of morphogenesis 2 (1068 aa).

A GBD/FH3 domain is found at 40–416; it reads SPIPNAEELN…QIVLQDERGV (377 aa). The stretch at 434–516 forms a coiled coil; the sequence is MLINENEVKQ…LVAQLSELST (83 aa). Residues 514-586 are disordered; sequence LSTGPVSSPP…MGLPLPQDPY (73 aa). Residues 518 to 594 enclose the FH1 domain; sequence PVSSPPPPGG…PYPSSDVPLR (77 aa). Residues 540-572 are compositionally biased toward pro residues; it reads LPPPPPPLPFACCPPPPPPPLPPGGPPTPPGAP. The FH2 domain occupies 595 to 994; sequence KKRVPQPSHP…EERRARMEAM (400 aa). The residue at position 1015 (Ser1015) is a Phosphoserine. The 33-residue stretch at 1016-1048 folds into the DAD domain; that stretch reads SLEEGGEFDDLVSALRSGEVFDKDLCKLKRSRK.

This sequence belongs to the formin homology family. Interacts with DVL3. Interacts with INF2. As to expression, expressed in most tissues examined. Expressed in kidney glomeruli.

Its function is as follows. Key regulator of the Wnt signaling pathway, which is required for various processes during development, such as dorsal patterning, determination of left/right symmetry or myelination in the central nervous system. Acts downstream of Wnt ligands and upstream of beta-catenin (CTNNB1). Required for canonical Wnt signaling pathway during patterning in the dorsal spinal cord by promoting the aggregation of Disheveled (Dvl) complexes, thereby clustering and formation of Wnt receptor signalosomes and potentiating Wnt activity. During dorsal patterning of the spinal cord, inhibits oligodendrocytes differentiation via interaction with PIP5K1A. Also regulates non-canonical Wnt signaling pathway. Acts downstream of PITX2 in the developing gut and is required for left/right asymmetry within dorsal mesentery: affects mesenchymal condensation by lengthening cadherin-based junctions through WNT5A and non-canonical Wnt signaling, inducing polarized condensation in the left dorsal mesentery necessary to initiate gut rotation. Together with DAAM1, required for myocardial maturation and sarcomere assembly. Is a regulator of actin nucleation and elongation, filopodia formation and podocyte migration. The chain is Disheveled-associated activator of morphogenesis 2 from Homo sapiens (Human).